The chain runs to 470 residues: Cyclin-dependent kinase E-1 (470 aa).

The 309-residue stretch at Y25–F333 folds into the Protein kinase domain. ATP contacts are provided by residues I31–V39 and K55. Y36 bears the Phosphotyrosine mark. D154 serves as the catalytic Proton acceptor. Positions L428–L470 are disordered. Polar residues predominate over residues V432–Q448.

The protein belongs to the protein kinase superfamily. CMGC Ser/Thr protein kinase family. CDC2/CDKX subfamily. Interacts with MED14, HDA19 and LUG. Interacts with KIN10. As to expression, expressed in roots, leaves and stems. Expressed in young dividing tissue, such as shoot and root tips, lateral root primordia, young leaves and flowers. Expressed in the inflorescence meristem, inflorescence stem and young flowers.

It localises to the nucleus. The catalysed reaction is L-seryl-[protein] + ATP = O-phospho-L-seryl-[protein] + ADP + H(+). It carries out the reaction L-threonyl-[protein] + ATP = O-phospho-L-threonyl-[protein] + ADP + H(+). The enzyme catalyses [DNA-directed RNA polymerase] + ATP = phospho-[DNA-directed RNA polymerase] + ADP + H(+). Functionally, involved in cell differentiation. Required for the specification of stamen and carpel identities and for the proper termination of stem cells in the floral meristem. This chain is Cyclin-dependent kinase E-1 (CDKE-1), found in Arabidopsis thaliana (Mouse-ear cress).